Reading from the N-terminus, the 153-residue chain is Gamma-glutamylaminecyclotransferase (153 aa).

7 to 10 contacts substrate; the sequence is YGTL. Catalysis depends on Glu-82, which acts as the Proton acceptor. The interval 130–153 is disordered; the sequence is QLPHHDSYDSEGPHGLRYNPRENR. A compositionally biased stretch (basic and acidic residues) spans 132 to 153; that stretch reads PHHDSYDSEGPHGLRYNPRENR.

Belongs to the gamma-glutamylcyclotransferase family. Monomer.

It carries out the reaction epsilon-(gamma-L-glutamyl)-L-lysine = 5-oxo-L-proline + L-lysine. In terms of biological role, contributes to degradation of proteins cross-linked by transglutaminases by degrading the cross-link between a lysine and a glutamic acid residue. Catalyzes the formation of 5-oxo-L-proline from L-gamma-glutamyl-L-epsilon-lysine. Inactive with L-gamma-glutamyl-alpha-amino acid substrates such as L-gamma-glutamyl-L-alpha-cysteine and L-gamma-glutamyl-L-alpha-alanine. The protein is Gamma-glutamylaminecyclotransferase (GGACT) of Homo sapiens (Human).